A 305-amino-acid polypeptide reads, in one-letter code: Homoserine O-acetyltransferase (305 aa).

Residue cysteine 142 is the Acyl-thioester intermediate of the active site. Residues lysine 163 and serine 192 each coordinate substrate. The active-site Proton acceptor is the histidine 235. Glutamate 237 is a catalytic residue. Residue arginine 249 coordinates substrate.

It belongs to the MetA family.

The protein localises to the cytoplasm. It catalyses the reaction L-homoserine + acetyl-CoA = O-acetyl-L-homoserine + CoA. The protein operates within amino-acid biosynthesis; L-methionine biosynthesis via de novo pathway; O-acetyl-L-homoserine from L-homoserine: step 1/1. In terms of biological role, transfers an acetyl group from acetyl-CoA to L-homoserine, forming acetyl-L-homoserine. The sequence is that of Homoserine O-acetyltransferase from Bacteroides fragilis (strain YCH46).